Here is a 202-residue protein sequence, read N- to C-terminus: Adenosylcobalamin/alpha-ribazole phosphatase (202 aa).

His-8 acts as the Tele-phosphohistidine intermediate in catalysis. The active-site Proton donor/acceptor is Glu-81.

This sequence belongs to the phosphoglycerate mutase family. Monomer.

It carries out the reaction adenosylcob(III)alamin 5'-phosphate + H2O = adenosylcob(III)alamin + phosphate. The catalysed reaction is alpha-ribazole 5'-phosphate + H2O = alpha-ribazole + phosphate. Its pathway is nucleoside biosynthesis; alpha-ribazole biosynthesis; alpha-ribazole from 5,6-dimethylbenzimidazole: step 2/2. Functionally, catalyzes the conversion of adenosylcobalamin 5'-phosphate to adenosylcobalamin (vitamin B12); involved in the assembly of the nucleotide loop of cobalamin. Also catalyzes the hydrolysis of the phospho group from alpha-ribazole 5'-phosphate to form alpha-ribazole. This is Adenosylcobalamin/alpha-ribazole phosphatase (cobC) from Salmonella typhimurium (strain LT2 / SGSC1412 / ATCC 700720).